The primary structure comprises 430 residues: Enolase (430 aa).

Gln163 contacts (2R)-2-phosphoglycerate. Glu205 acts as the Proton donor in catalysis. Residues Asp242, Glu287, and Asp314 each contribute to the Mg(2+) site. Positions 339, 368, 369, and 390 each coordinate (2R)-2-phosphoglycerate. The Proton acceptor role is filled by Lys339.

It belongs to the enolase family. Requires Mg(2+) as cofactor.

It localises to the cytoplasm. The protein localises to the secreted. The protein resides in the cell surface. It carries out the reaction (2R)-2-phosphoglycerate = phosphoenolpyruvate + H2O. The protein operates within carbohydrate degradation; glycolysis; pyruvate from D-glyceraldehyde 3-phosphate: step 4/5. Functionally, catalyzes the reversible conversion of 2-phosphoglycerate (2-PG) into phosphoenolpyruvate (PEP). It is essential for the degradation of carbohydrates via glycolysis. This chain is Enolase, found in Bacillus pumilus (strain SAFR-032).